We begin with the raw amino-acid sequence, 440 residues long: Serine/threonine-protein kinase 2 (440 aa).

Positions 85–440 (NDDFYHISTG…FSNWINGESC (356 aa)) constitute a Protein kinase domain. ATP-binding positions include 91–99 (ISTGGYGIV) and Lys115. Catalysis depends on Asp306, which acts as the Proton acceptor.

This sequence belongs to the protein kinase superfamily. Ser/Thr protein kinase family. Poxviruses subfamily. In terms of processing, phosphorylated in vivo. Autophosphorylated in vitro.

Its subcellular location is the host endoplasmic reticulum. The protein resides in the host endoplasmic reticulum-Golgi intermediate compartment. The catalysed reaction is L-seryl-[protein] + ATP = O-phospho-L-seryl-[protein] + ADP + H(+). The enzyme catalyses L-threonyl-[protein] + ATP = O-phospho-L-threonyl-[protein] + ADP + H(+). In terms of biological role, essential serine-protein kinase involved in the early stage of virion morphogenesis. The polypeptide is Serine/threonine-protein kinase 2 (OPG054) (Sus scrofa (Pig)).